A 103-amino-acid polypeptide reads, in one-letter code: Small ribosomal subunit protein uS10 (103 aa).

This sequence belongs to the universal ribosomal protein uS10 family. As to quaternary structure, part of the 30S ribosomal subunit.

Functionally, involved in the binding of tRNA to the ribosomes. This chain is Small ribosomal subunit protein uS10, found in Neisseria gonorrhoeae.